We begin with the raw amino-acid sequence, 124 residues long: Small ribosomal subunit protein uS12 (124 aa).

Position 89 is a 3-methylthioaspartic acid (aspartate 89). Lysine 108 carries the N6-acetyllysine modification.

The protein belongs to the universal ribosomal protein uS12 family. Part of the 30S ribosomal subunit. Contacts proteins S8 and S17. May interact with IF1 in the 30S initiation complex.

With S4 and S5 plays an important role in translational accuracy. In terms of biological role, interacts with and stabilizes bases of the 16S rRNA that are involved in tRNA selection in the A site and with the mRNA backbone. Located at the interface of the 30S and 50S subunits, it traverses the body of the 30S subunit contacting proteins on the other side and probably holding the rRNA structure together. The combined cluster of proteins S8, S12 and S17 appears to hold together the shoulder and platform of the 30S subunit. The protein is Small ribosomal subunit protein uS12 of Escherichia coli O6:K15:H31 (strain 536 / UPEC).